The sequence spans 485 residues: Aspartyl/glutamyl-tRNA(Asn/Gln) amidotransferase subunit B (485 aa).

It belongs to the GatB/GatE family. GatB subfamily. As to quaternary structure, heterotrimer of A, B and C subunits.

It carries out the reaction L-glutamyl-tRNA(Gln) + L-glutamine + ATP + H2O = L-glutaminyl-tRNA(Gln) + L-glutamate + ADP + phosphate + H(+). The catalysed reaction is L-aspartyl-tRNA(Asn) + L-glutamine + ATP + H2O = L-asparaginyl-tRNA(Asn) + L-glutamate + ADP + phosphate + 2 H(+). Its function is as follows. Allows the formation of correctly charged Asn-tRNA(Asn) or Gln-tRNA(Gln) through the transamidation of misacylated Asp-tRNA(Asn) or Glu-tRNA(Gln) in organisms which lack either or both of asparaginyl-tRNA or glutaminyl-tRNA synthetases. The reaction takes place in the presence of glutamine and ATP through an activated phospho-Asp-tRNA(Asn) or phospho-Glu-tRNA(Gln). In Anaplasma marginale (strain St. Maries), this protein is Aspartyl/glutamyl-tRNA(Asn/Gln) amidotransferase subunit B.